A 256-amino-acid chain; its full sequence is Pimeloyl-[acyl-carrier protein] methyl ester esterase (256 aa).

An AB hydrolase-1 domain is found at 15–242; it reads HLVLLHGWGL…AAHAPFISHP (228 aa). Residues Trp22, 82–83, and 143–147 contribute to the substrate site; these read SL and FLALQ. Catalysis depends on Ser82, which acts as the Nucleophile. Catalysis depends on residues Asp207 and His235. Residue His235 participates in substrate binding.

This sequence belongs to the AB hydrolase superfamily. Carboxylesterase BioH family. In terms of assembly, monomer.

The protein resides in the cytoplasm. The catalysed reaction is 6-carboxyhexanoyl-[ACP] methyl ester + H2O = 6-carboxyhexanoyl-[ACP] + methanol + H(+). Its pathway is cofactor biosynthesis; biotin biosynthesis. Its function is as follows. The physiological role of BioH is to remove the methyl group introduced by BioC when the pimeloyl moiety is complete. It allows to synthesize pimeloyl-ACP via the fatty acid synthetic pathway through the hydrolysis of the ester bonds of pimeloyl-ACP esters. The sequence is that of Pimeloyl-[acyl-carrier protein] methyl ester esterase from Salmonella agona (strain SL483).